A 313-amino-acid polypeptide reads, in one-letter code: Ribosomal RNA small subunit methyltransferase H (313 aa).

Residues 48–50 (GGH), aspartate 68, phenylalanine 102, aspartate 120, and glutamine 127 each bind S-adenosyl-L-methionine. Residues 290-313 (TATEEEIDRNPRSRSAKLRAAARK) are disordered. Over residues 301–313 (RSRSAKLRAAARK) the composition is skewed to basic residues.

It belongs to the methyltransferase superfamily. RsmH family.

It is found in the cytoplasm. It catalyses the reaction cytidine(1402) in 16S rRNA + S-adenosyl-L-methionine = N(4)-methylcytidine(1402) in 16S rRNA + S-adenosyl-L-homocysteine + H(+). Functionally, specifically methylates the N4 position of cytidine in position 1402 (C1402) of 16S rRNA. The protein is Ribosomal RNA small subunit methyltransferase H of Koribacter versatilis (strain Ellin345).